Here is a 294-residue protein sequence, read N- to C-terminus: Non-selective voltage-gated ion channel VDAC2 (294 aa).

A2 carries the post-translational modification N-acetylalanine. ATP contacts are provided by K23 and K31. K31 is subject to N6-acetyllysine; alternate. The residue at position 31 (K31) is an N6-succinyllysine; alternate. K31 participates in a covalent cross-link: Glycyl lysine isopeptide (Lys-Gly) (interchain with G-Cter in ubiquitin); alternate. 2 consecutive transmembrane segments (beta stranded) span residues 37 to 46 (LVKLDVKTKS) and 50 to 58 (VEFSTSGSS). Residue K64 forms a Glycyl lysine isopeptide (Lys-Gly) (interchain with G-Cter in ubiquitin) linkage. The chain crosses the membrane as a beta stranded span at residues 65–75 (VTGTLETKYKW). Position 78 is a phosphotyrosine (Y78). Beta stranded transmembrane passes span 80-87 (LTFTEKWN), 91-100 (TLGTEIAIED), and 106-115 (LKLTFDTTFS). T118 carries the post-translational modification Phosphothreonine. K120 bears the N6-acetyllysine; alternate mark. K120 is covalently cross-linked (Glycyl lysine isopeptide (Lys-Gly) (interchain with G-Cter in ubiquitin); alternate). K121 is covalently cross-linked (Glycyl lysine isopeptide (Lys-Gly) (interchain with G-Cter in ubiquitin)). A run of 4 beta stranded transmembrane segments spans residues 122 to 131 (SGKIKSSYKR), 134 to 141 (INLGCDVD), 148 to 156 (AIHGSAVFG), and 161 to 169 (LAGYQMTFD). K172 participates in a covalent cross-link: Glycyl lysine isopeptide (Lys-Gly) (interchain with G-Cter in ubiquitin). 6 consecutive transmembrane segments (beta stranded) span residues 174–186 (KLTRNNFAVGYRT), 189–196 (FQLHTNVN), 200–209 (EFGGSIYQKV), 213–222 (LDTSVNLAWT), 229–238 (RFGIAAKYQL), and 242–249 (ASISAKVN). S251 carries the post-translational modification Phosphoserine. NAD(+)-binding positions include 253 to 255 (LIG) and 271 to 275 (SALVD). The next 2 beta stranded transmembrane spans lie at 253 to 262 (LIGVGYTQTL) and 265 to 274 (GVKLTLSALV). K277 carries the post-translational modification N6-acetyllysine; alternate. K277 participates in a covalent cross-link: Glycyl lysine isopeptide (Lys-Gly) (interchain with G-Cter in ubiquitin); alternate. A beta stranded transmembrane segment spans residues 284 to 293 (HKLGLALELE).

The protein belongs to the eukaryotic mitochondrial porin family. As to quaternary structure, monomer, homodimer and higher order oligomers; formation of higher order structures is necessary for scramblase activity. Interacts with ARMC12 in a TBC1D21-dependent manner. Interacts with KLC3. Interacts with SPATA33. Interacts with PPP3CC in a SPATA33-dependent manner. Ubiquitinated by PRKN during mitophagy, leading to its degradation and enhancement of mitophagy. Deubiquitinated by USP30.

The protein localises to the mitochondrion outer membrane. It is found in the membrane. The enzyme catalyses chloride(in) = chloride(out). It carries out the reaction K(+)(in) = K(+)(out). The catalysed reaction is a 1,2-diacyl-sn-glycero-3-phospho-L-serine(in) = a 1,2-diacyl-sn-glycero-3-phospho-L-serine(out). It catalyses the reaction a 1,2-diacyl-sn-glycero-3-phosphocholine(in) = a 1,2-diacyl-sn-glycero-3-phosphocholine(out). The enzyme catalyses a 1,2-diacyl-sn-glycero-3-phospho-(1D-myo-inositol)(in) = a 1,2-diacyl-sn-glycero-3-phospho-(1D-myo-inositol)(out). Its function is as follows. Non-selective voltage-gated ion channel that mediates the transport of anions and cations through the mitochondrion outer membrane and plasma membrane. The channel adopts an open conformation at zero mV and a closed conformation at both positive and negative potentials. There are two populations of channels; the main that functions in a lower open-state conductance with lower ion selectivity, that switch, in a voltage-dependent manner, from the open to a low-conducting 'closed' state and the other that has a normal ion selectivity in the typical high conductance, 'open' state. Binds various lipids, including the sphingolipid ceramide, the phospholipid phosphatidylcholine, and the sterols cholesterol and oxysterol. Binding of ceramide promotes the mitochondrial outer membrane permeabilization (MOMP) apoptotic pathway. In terms of biological role, catalyzes the scrambling of phospholipids across the outer mitochondrial membrane; the mechanism is unrelated to channel activity and is capable of translocating both anionic and zwitterionic phospholipids. This chain is Non-selective voltage-gated ion channel VDAC2, found in Bos taurus (Bovine).